The chain runs to 302 residues: Glycine--tRNA ligase alpha subunit (302 aa).

Belongs to the class-II aminoacyl-tRNA synthetase family. In terms of assembly, tetramer of two alpha and two beta subunits.

It is found in the cytoplasm. It catalyses the reaction tRNA(Gly) + glycine + ATP = glycyl-tRNA(Gly) + AMP + diphosphate. The protein is Glycine--tRNA ligase alpha subunit (glyQ) of Haemophilus influenzae (strain ATCC 51907 / DSM 11121 / KW20 / Rd).